A 526-amino-acid chain; its full sequence is Phenylacetaldehyde oxime monooxygenase CYP71AN24 (526 aa).

The chain crosses the membrane as a helical span at residues 22 to 42; it reads SFNIFLVPILCLSIFILFSLT. Cysteine 465 contributes to the heme binding site.

The protein belongs to the cytochrome P450 family. Requires heme as cofactor. In terms of tissue distribution, expressed in seedlings and leaves.

The protein resides in the membrane. It carries out the reaction (E)-phenylacetaldehyde oxime + reduced [NADPH--hemoprotein reductase] + O2 = (R)-mandelonitrile + oxidized [NADPH--hemoprotein reductase] + 2 H2O + H(+). The enzyme catalyses phenylacetonitrile + reduced [NADPH--hemoprotein reductase] + O2 = (R)-mandelonitrile + oxidized [NADPH--hemoprotein reductase] + H2O + H(+). Functionally, involved in L-phenylalanine-derived cyanogenic glycoside biosynthesis, including prunasin and amygdalin defensive agents. Catalyzes the conversion of phenylacetaldoxime (PAOx) and phenylacetonitrile (PAN) into mandelonitrile (MAN). To a lower extent, can convert various aromatic aldoximes and nitriles; mediates the transformation of 4-hydroxyphenylacetaldoxime, 4-hydroxyphenylacetonitrile, indole-3-acetal-doxime and indole-3-acetonitrile into the corresponding hydroxynitriles, but cannot use the aliphatic compounds 2-methylpropanaloxime and 2-methylpropanenitrile as substrates. The chain is Phenylacetaldehyde oxime monooxygenase CYP71AN24 from Prunus mume (Japanese apricot).